A 545-amino-acid polypeptide reads, in one-letter code: CTP synthase (545 aa).

Residues 1–266 (MTHFIFVTGG…DDLICERFGF (266 aa)) form an amidoligase domain region. Residue serine 13 participates in CTP binding. Serine 13 provides a ligand contact to UTP. Residues 14-19 (SLGKGI) and aspartate 71 contribute to the ATP site. 2 residues coordinate Mg(2+): aspartate 71 and glutamate 140. CTP-binding positions include 147–149 (DIE), 187–192 (KTKPTQ), and lysine 223. UTP is bound by residues 187-192 (KTKPTQ) and lysine 223. 239–241 (KDA) is a binding site for ATP. The region spanning 292–543 (RVAMVGKYVE…IDAAKTQHQK (252 aa)) is the Glutamine amidotransferase type-1 domain. Glycine 353 is an L-glutamine binding site. The Nucleophile; for glutamine hydrolysis role is filled by cysteine 380. L-glutamine-binding positions include 381–384 (LGMQ), glutamate 404, and arginine 471. Catalysis depends on residues histidine 516 and glutamate 518.

Belongs to the CTP synthase family. Homotetramer.

The catalysed reaction is UTP + L-glutamine + ATP + H2O = CTP + L-glutamate + ADP + phosphate + 2 H(+). The enzyme catalyses L-glutamine + H2O = L-glutamate + NH4(+). It carries out the reaction UTP + NH4(+) + ATP = CTP + ADP + phosphate + 2 H(+). Its pathway is pyrimidine metabolism; CTP biosynthesis via de novo pathway; CTP from UDP: step 2/2. With respect to regulation, allosterically activated by GTP, when glutamine is the substrate; GTP has no effect on the reaction when ammonia is the substrate. The allosteric effector GTP functions by stabilizing the protein conformation that binds the tetrahedral intermediate(s) formed during glutamine hydrolysis. Inhibited by the product CTP, via allosteric rather than competitive inhibition. Functionally, catalyzes the ATP-dependent amination of UTP to CTP with either L-glutamine or ammonia as the source of nitrogen. Regulates intracellular CTP levels through interactions with the four ribonucleotide triphosphates. This chain is CTP synthase, found in Acinetobacter baumannii (strain ACICU).